The chain runs to 291 residues: Capsid protein (291 aa).

Positions 1–14 (MQSRPAQESGSASE) are enriched in polar residues. Residues 1-36 (MQSRPAQESGSASETPARGRPTPSDAPRDEPTNYNN) form a disordered region.

This sequence belongs to the potexviruses coat protein family.

It is found in the virion. Its function is as follows. Required for genome encapsidation. Forms ribonucleoprotein complexes along with TGB1 helicase and viral RNA. This chain is Capsid protein, found in Lily symptomless virus (LSV).